A 332-amino-acid polypeptide reads, in one-letter code: Adenosine deaminase (332 aa).

Zn(2+) contacts are provided by histidine 12 and histidine 14. The substrate site is built by histidine 14, aspartate 16, and glycine 170. Position 197 (histidine 197) interacts with Zn(2+). Residue glutamate 200 is the Proton donor of the active site. Aspartate 278 is a Zn(2+) binding site.

Belongs to the metallo-dependent hydrolases superfamily. Adenosine and AMP deaminases family. Adenosine deaminase subfamily. It depends on Zn(2+) as a cofactor.

The catalysed reaction is adenosine + H2O + H(+) = inosine + NH4(+). It carries out the reaction 2'-deoxyadenosine + H2O + H(+) = 2'-deoxyinosine + NH4(+). Its function is as follows. Catalyzes the hydrolytic deamination of adenosine and 2-deoxyadenosine. The sequence is that of Adenosine deaminase from Clostridium perfringens (strain 13 / Type A).